We begin with the raw amino-acid sequence, 124 residues long: Small ribosomal subunit protein uS11 (124 aa).

Belongs to the universal ribosomal protein uS11 family. In terms of assembly, part of the 30S ribosomal subunit. Interacts with proteins S7 and S18. Binds to IF-3.

Functionally, located on the platform of the 30S subunit, it bridges several disparate RNA helices of the 16S rRNA. Forms part of the Shine-Dalgarno cleft in the 70S ribosome. In Sulfurovum sp. (strain NBC37-1), this protein is Small ribosomal subunit protein uS11.